A 108-amino-acid chain; its full sequence is Large ribosomal subunit protein eL36x (108 aa).

Disordered stretches follow at residues 13 to 34 (GHVV…KTSK) and 75 to 108 (KLGT…EKKK). Positions 75 to 84 (KLGTHKRAKR) are enriched in basic residues.

The protein belongs to the eukaryotic ribosomal protein eL36 family.

The chain is Large ribosomal subunit protein eL36x (RPL36C) from Arabidopsis thaliana (Mouse-ear cress).